A 48-amino-acid chain; its full sequence is Cuticle protein 10 (48 aa).

This Limulus polyphemus (Atlantic horseshoe crab) protein is Cuticle protein 10.